The primary structure comprises 221 residues: GTP-binding nuclear protein Ran-3 (221 aa).

The Small GTPase Ran-type domain occupies 10–174 (DYPSFKLVIV…LYLARKLAGD (165 aa)). 21 to 28 (DGGTGKTT) serves as a coordination point for GTP. Positions 40 to 48 (KKYEPTIGV) are switch-I. GTP contacts are provided by residues Gly71, 125–128 (NKVD), and 153–155 (SAK). Residues 71–87 (GQEKFGGLRDGYYIHGQ) are switch-II. Residues 201–221 (EAELAAAASQPLPDDDDDTFE) form a disordered region.

This sequence belongs to the small GTPase superfamily. Ran family. In terms of assembly, found in a nuclear export complex with RanGTP, exportin and pre-miRNA. Interacts with RanBP1a and RanBP1b. Interacts with KPNB1.

The protein resides in the nucleus. Functionally, GTP-binding protein involved in nucleocytoplasmic transport. Required for the import of protein into the nucleus and also for RNA export. Involved in chromatin condensation and control of cell cycle. The polypeptide is GTP-binding nuclear protein Ran-3 (RAN3) (Arabidopsis thaliana (Mouse-ear cress)).